A 409-amino-acid polypeptide reads, in one-letter code: Nucleoprotein (409 aa).

Disordered stretches follow at residues methionine 1–asparagine 32, isoleucine 46–histidine 68, arginine 164–leucine 196, and valine 238–methionine 258. Low complexity predominate over residues proline 15–glycine 31. Residues serine 29–leucine 160 form an RNA-binding region. The CoV N NTD domain occupies glycine 31–aspartate 156. The span at glycine 166–alanine 179 shows a compositional bias: low complexity. Composition is skewed to basic and acidic residues over residues proline 180 to serine 192 and lysine 247 to methionine 258. 2 positions are modified to phosphoserine; by host: serine 190 and serine 192. The 117-residue stretch at threonine 215–proline 331 folds into the CoV N CTD domain. The interval arginine 226 to aspartate 333 is dimerization. Cysteine 320 and cysteine 323 are disulfide-bonded. Positions glycine 326–leucine 409 are disordered. The span at glutamine 358 to lysine 367 shows a compositional bias: basic residues. The segment covering lysine 368–asparagine 384 has biased composition (basic and acidic residues). Threonine 378 carries the phosphothreonine; by host modification. Residue serine 379 is modified to Phosphoserine; by host.

It belongs to the gammacoronavirus nucleocapsid protein family. As to quaternary structure, homooligomer. Both monomeric and oligomeric forms interact with RNA. Interacts with protein M. Interacts with NSP3; this interaction serves to tether the genome to the newly translated replicase-transcriptase complex at a very early stage of infection. ADP-ribosylated. The ADP-ribosylation is retained in the virion during infection. In terms of processing, phosphorylated on serine and threonine residues.

Its subcellular location is the virion. The protein localises to the host endoplasmic reticulum-Golgi intermediate compartment. It localises to the host Golgi apparatus. Its function is as follows. Packages the positive strand viral genome RNA into a helical ribonucleocapsid (RNP) and plays a fundamental role during virion assembly through its interactions with the viral genome and membrane protein M. Plays an important role in enhancing the efficiency of subgenomic viral RNA transcription as well as viral replication. The sequence is that of Nucleoprotein from Avian infectious bronchitis virus (strain M41) (IBV).